The chain runs to 493 residues: Cardiolipin synthase 1 (493 aa).

2 helical membrane-spanning segments follow: residues 13 to 33 (FTII…IIIF) and 45 to 65 (WAWL…YLFF). PLD phosphodiesterase domains are found at residues 228 to 255 (MNNR…GDEY) and 406 to 433 (ENGF…DFRS). Active-site residues include H233, K235, D240, H411, K413, and D418.

Belongs to the phospholipase D family. Cardiolipin synthase subfamily.

Its subcellular location is the cell membrane. It carries out the reaction 2 a 1,2-diacyl-sn-glycero-3-phospho-(1'-sn-glycerol) = a cardiolipin + glycerol. Functionally, catalyzes the reversible phosphatidyl group transfer from one phosphatidylglycerol molecule to another to form cardiolipin (CL) (diphosphatidylglycerol) and glycerol. The chain is Cardiolipin synthase 1 (cls1) from Staphylococcus aureus (strain MRSA252).